We begin with the raw amino-acid sequence, 70 residues long: Brevinin-1MT1 (70 aa).

The signal sequence occupies residues Met1 to Cys22. The propeptide occupies Glu23 to Glu44. An intrachain disulfide couples Cys64 to Cys70.

The protein belongs to the frog skin active peptide (FSAP) family. Brevinin subfamily. In terms of tissue distribution, expressed by the skin glands.

It is found in the secreted. Its function is as follows. Antimicrobial peptide with activity against a variety of Gram-negative and Gram-positive bacteria and against fungi. Shows strong hemolytic activity against human erythrocytes. This Amolops mantzorum (Sichuan torrent frog) protein is Brevinin-1MT1.